The chain runs to 201 residues: Small ribosomal subunit protein uS4c (201 aa).

One can recognise an S4 RNA-binding domain in the interval 89 to 157; sequence MRLDNILFRL…VQNYIASSDP (69 aa).

Belongs to the universal ribosomal protein uS4 family. As to quaternary structure, part of the 30S ribosomal subunit. Contacts protein S5. The interaction surface between S4 and S5 is involved in control of translational fidelity.

Its subcellular location is the plastid. It is found in the chloroplast. One of the primary rRNA binding proteins, it binds directly to 16S rRNA where it nucleates assembly of the body of the 30S subunit. In terms of biological role, with S5 and S12 plays an important role in translational accuracy. The polypeptide is Small ribosomal subunit protein uS4c (rps4) (Hordeum vulgare (Barley)).